A 61-amino-acid polypeptide reads, in one-letter code: Small ribosomal subunit protein uS14 (61 aa).

Positions 24, 27, 40, and 43 each coordinate Zn(2+).

It belongs to the universal ribosomal protein uS14 family. Zinc-binding uS14 subfamily. As to quaternary structure, part of the 30S ribosomal subunit. Contacts proteins S3 and S10. Zn(2+) serves as cofactor.

In terms of biological role, binds 16S rRNA, required for the assembly of 30S particles and may also be responsible for determining the conformation of the 16S rRNA at the A site. In Campylobacter hominis (strain ATCC BAA-381 / DSM 21671 / CCUG 45161 / LMG 19568 / NCTC 13146 / CH001A), this protein is Small ribosomal subunit protein uS14.